Consider the following 459-residue polypeptide: ATP synthase subunit beta (459 aa).

148 to 155 (GGAGVGKT) lines the ATP pocket.

Belongs to the ATPase alpha/beta chains family. In terms of assembly, F-type ATPases have 2 components, CF(1) - the catalytic core - and CF(0) - the membrane proton channel. CF(1) has five subunits: alpha(3), beta(3), gamma(1), delta(1), epsilon(1). CF(0) has three main subunits: a(1), b(2) and c(9-12). The alpha and beta chains form an alternating ring which encloses part of the gamma chain. CF(1) is attached to CF(0) by a central stalk formed by the gamma and epsilon chains, while a peripheral stalk is formed by the delta and b chains.

It is found in the cell inner membrane. It carries out the reaction ATP + H2O + 4 H(+)(in) = ADP + phosphate + 5 H(+)(out). Its function is as follows. Produces ATP from ADP in the presence of a proton gradient across the membrane. The catalytic sites are hosted primarily by the beta subunits. This chain is ATP synthase subunit beta, found in Ruthia magnifica subsp. Calyptogena magnifica.